The sequence spans 699 residues: Elongation factor G (699 aa).

Residues 8-283 form the tr-type G domain; that stretch reads EQIRNIGICA…AIVDFLPSPI (276 aa). GTP contacts are provided by residues 17-24, 81-85, and 135-138; these read AHIDAGKT, DTPGH, and NKMD.

The protein belongs to the TRAFAC class translation factor GTPase superfamily. Classic translation factor GTPase family. EF-G/EF-2 subfamily.

The protein localises to the cytoplasm. Its function is as follows. Catalyzes the GTP-dependent ribosomal translocation step during translation elongation. During this step, the ribosome changes from the pre-translocational (PRE) to the post-translocational (POST) state as the newly formed A-site-bound peptidyl-tRNA and P-site-bound deacylated tRNA move to the P and E sites, respectively. Catalyzes the coordinated movement of the two tRNA molecules, the mRNA and conformational changes in the ribosome. In Rickettsia prowazekii (strain Madrid E), this protein is Elongation factor G (fusA).